The primary structure comprises 496 residues: E3 ubiquitin-protein ligase CBL-C (496 aa).

Residues 7 to 144 (PRGWQRGEPR…SALFPAGKYC (138 aa)) form a 4H region. A Cbl-PTB domain is found at 7 to 320 (PRGWQRGEPR…GKKHNPDLTE (314 aa)). An EF-hand-like region spans residues 145-217 (GHLYQLTKGS…FEFDVFTRLF (73 aa)). The Ca(2+) site is built by D198, T200, N202, and E209. The tract at residues 218–320 (QPWPTLLRNW…GKKHNPDLTE (103 aa)) is SH2-like. R263 is a binding site for 4-O-phospho-L-tyrosine. Residues 321 to 349 (LCRVEPYQRIQVSEEQLLLYQAMNSTFQL) form a linker region. At Y340 the chain carries Phosphotyrosine; by SRC. The RING-type zinc finger occupies 350–389 (CKICAERDKDVRIEPCGHLLCSCCLAAWQDSDSQTCPFCR). The tract at residues 350-494 (CKICAERDKD…RPRAREEATE (145 aa)) is interaction with RET. The tract at residues 432-453 (PVIPSAPSLLPEDQFPQGPQDK) is disordered.

As to quaternary structure, interacts with Ubiquitin-conjugating enzyme E2 UBE2D2 and UBE2D3. Isoform 1 interacts with EGFR (tyrosine phosphorylated). Interacts with the SH3 domain proteins LYN and CRK. Interacts (via RING-type zinc finger) with TGFB1I1 (via LIM zinc-binding domain 2); the interaction is direct and enhances the E3 activity. Interacts directly with RET (inactive) and CD2AP; dissociates from RET upon RET activation by GDNF which also increases the interaction with CD2AP suggesting dissociation as CBLC:CD2AP complex. Interacts with SRC; the interaction is enhanced when SRC is phosphorylated at 'Tyr-419'. Phosphorylated on tyrosines by EGFR. In terms of processing, phosphorylated on multiple tyrosine residues by SRC. Isoform 1, but not isoform 2, is phosphorylated on tyrosines by EGFR. Post-translationally, autoubiquitinated, when phosphorylated at Tyr-340. In terms of tissue distribution, widely expressed in tissues, where the expression is restricted to epithelial cells (at protein level).

The catalysed reaction is S-ubiquitinyl-[E2 ubiquitin-conjugating enzyme]-L-cysteine + [acceptor protein]-L-lysine = [E2 ubiquitin-conjugating enzyme]-L-cysteine + N(6)-ubiquitinyl-[acceptor protein]-L-lysine.. Its activity is regulated as follows. Phosphorylation at Tyr-340 is necessary and sufficient for the activation of E3 activity. In terms of biological role, acts as an E3 ubiquitin-protein ligase, which accepts ubiquitin from specific E2 ubiquitin-conjugating enzymes, and then transfers it to substrates promoting their degradation by the proteasome. Functionally coupled with the E2 ubiquitin-protein ligases UB2D1, UB2D2 and UB2D3. Regulator of EGFR mediated signal transduction; upon EGF activation, ubiquitinates EGFR. Isoform 1, but not isoform 2, inhibits EGF stimulated MAPK1 activation. Promotes ubiquitination of SRC phosphorylated at 'Tyr-424', has the highest ubiquitin ligase activity among CBL family proteins. In collaboration with CD2AP may act as regulatory checkpoint for Ret signaling by modulating the rate of RET degradation after ligand activation; CD2AP converts it from an inhibitor to a promoter of RET degradation; the function limits the potency of GDNF on neuronal survival. This Mus musculus (Mouse) protein is E3 ubiquitin-protein ligase CBL-C (Cblc).